A 457-amino-acid polypeptide reads, in one-letter code: MSQLNPKVGFVSLGCPKALVDSERILTQLRVEGYDIVPSYDAADVVVVNTCGFIDSAVTESLDAIGEAMNANGKVIVTGCLGKRPEQIREAYPQVLAVSGPQDYQSVMEAVHAALPPRHDPFVDLVPDYGIKLTPRHYAYLKISEGCNHRCSFCIIPSMRGDLASRPVDEVLREAERLVRGGVKELLVVSQDTSAYGVDLKYAERPWRDRMYQTRMKALCEGLSELGVWTRLHYVYPYPHVDDVIPLMAEGKLLPYLDIPFQHASPRILKLMKRPGAVEKTLERVQRWKAMCPEITVRSTFIVGFPGETDAEFEALLEFLDQAQLDRVGAFAYSPVEGASANALPDPVPEELKQERLARFMARQAEISAARLEAKIGSVQQCLVDLIEDDIAVARSRADAPEIDGLVHIQNGGELKLKVGDLVDVEITDSDEHDLFGDALPSDPAAQPPRALNLQMV.

In terms of domain architecture, MTTase N-terminal spans 6-116; sequence PKVGFVSLGC…VMEAVHAALP (111 aa). 6 residues coordinate [4Fe-4S] cluster: C15, C51, C80, C147, C151, and C154. The 238-residue stretch at 133–370 folds into the Radical SAM core domain; it reads LTPRHYAYLK…MARQAEISAA (238 aa). A TRAM domain is found at 373 to 441; that stretch reads EAKIGSVQQC…EHDLFGDALP (69 aa).

It belongs to the methylthiotransferase family. RimO subfamily. It depends on [4Fe-4S] cluster as a cofactor.

The protein resides in the cytoplasm. It carries out the reaction L-aspartate(89)-[ribosomal protein uS12]-hydrogen + (sulfur carrier)-SH + AH2 + 2 S-adenosyl-L-methionine = 3-methylsulfanyl-L-aspartate(89)-[ribosomal protein uS12]-hydrogen + (sulfur carrier)-H + 5'-deoxyadenosine + L-methionine + A + S-adenosyl-L-homocysteine + 2 H(+). In terms of biological role, catalyzes the methylthiolation of an aspartic acid residue of ribosomal protein uS12. The sequence is that of Ribosomal protein uS12 methylthiotransferase RimO from Xanthomonas campestris pv. campestris (strain 8004).